A 192-amino-acid polypeptide reads, in one-letter code: Transcription antitermination protein NusB (192 aa).

This sequence belongs to the NusB family.

In terms of biological role, involved in transcription antitermination. Required for transcription of ribosomal RNA (rRNA) genes. Binds specifically to the boxA antiterminator sequence of the ribosomal RNA (rrn) operons. The polypeptide is Transcription antitermination protein NusB (Lactococcus lactis subsp. lactis (strain IL1403) (Streptococcus lactis)).